We begin with the raw amino-acid sequence, 146 residues long: Snaclec coagulation factor IX/factor X-binding protein subunit B (146 aa).

The first 23 residues, 1-23 (MGRFIFMSFGFLVVFLSLSGTAA), serve as a signal peptide directing secretion. One can recognise a C-type lectin domain in the interval 24–146 (DCPSDWSSYE…MAQFVCEFQA (123 aa)). Cystine bridges form between Cys-25-Cys-36, Cys-53-Cys-142, and Cys-119-Cys-134. Ser-64, Gln-66, and Glu-70 together coordinate Ca(2+). Glu-143 provides a ligand contact to Ca(2+).

It belongs to the snaclec family. Heterodimer with subunit A of IX/X-bp or IX-bp; disulfide-linked. In terms of tissue distribution, expressed by the venom gland.

Its subcellular location is the secreted. When linked to subunit A of IX/X-bp, anticoagulant protein which binds to the gamma-carboxyglutamic acid-domain regions of factors IX (F9) and factor X (10) in the presence of calcium with a 1 to 1 stoichiometry. In terms of biological role, when linked to subunit A of IX-bp, anticoagulant protein which binds to the gamma-carboxyglutamic acid-domain regions of factor IX (but not to factor X) in the presence of calcium with a 1 to 1 stoichiometry. The protein is Snaclec coagulation factor IX/factor X-binding protein subunit B of Protobothrops flavoviridis (Habu).